The sequence spans 466 residues: Cysteine--tRNA ligase (466 aa).

C29 contributes to the Zn(2+) binding site. Residues 31 to 41 (ATVQAPPHIGH) carry the 'HIGH' region motif. C211, H236, and E240 together coordinate Zn(2+). Positions 267-271 (KMSKS) match the 'KMSKS' region motif. K270 contacts ATP.

The protein belongs to the class-I aminoacyl-tRNA synthetase family. Monomer. It depends on Zn(2+) as a cofactor.

The protein localises to the cytoplasm. The catalysed reaction is tRNA(Cys) + L-cysteine + ATP = L-cysteinyl-tRNA(Cys) + AMP + diphosphate. This is Cysteine--tRNA ligase from Thermobifida fusca (strain YX).